Here is a 66-residue protein sequence, read N- to C-terminus: Scarabaecin (66 aa).

A signal peptide spans 1–26 (MKTLTFYTLLLCAALYSNFFDCKAVA). Cys46 and Cys57 are oxidised to a cystine.

It localises to the secreted. Its function is as follows. Possesses antifungal activity against phytopathogenic fungi such as P.oryzae, R.solani and B.cinerea but not against phytopathogenic bacteria. Shows weak activity against the insect pathogenic fungus B.bassiana and against S.aureus. Binds chitin. The chain is Scarabaecin from Oryctes rhinoceros (Coconut rhinoceros beetle).